The primary structure comprises 271 residues: Membrane protein insertase YidC 1 (271 aa).

An N-terminal signal peptide occupies residues 1–20; it reads MKKKLKTFSLILLTGSLLVA. C21 is lipidated: N-palmitoyl cysteine. C21 is lipidated: S-diacylglycerol cysteine. Helical transmembrane passes span 45 to 65, 124 to 144, 163 to 183, and 201 to 221; these read IQWLSFNHSIGLGIILFTLII, YASVLPLLIQLPVLWALFQAL, PDPYYILPVLAALFTFLSTWL, and VMPFIILVTSFNFASGVVLYW.

Belongs to the OXA1/ALB3/YidC family. Type 2 subfamily.

It localises to the cell membrane. Functionally, required for the insertion and/or proper folding and/or complex formation of integral membrane proteins into the membrane. Involved in integration of membrane proteins that insert both dependently and independently of the Sec translocase complex, as well as at least some lipoproteins. The sequence is that of Membrane protein insertase YidC 1 from Streptococcus agalactiae serotype III (strain NEM316).